A 545-amino-acid polypeptide reads, in one-letter code: 2-succinyl-5-enolpyruvyl-6-hydroxy-3-cyclohexene-1-carboxylate synthase (545 aa).

The interval Pro-184–Thr-209 is disordered. Over residues Pro-195 to Pro-205 the composition is skewed to low complexity.

The protein belongs to the TPP enzyme family. MenD subfamily. As to quaternary structure, homodimer. It depends on Mg(2+) as a cofactor. Mn(2+) serves as cofactor. Thiamine diphosphate is required as a cofactor.

It carries out the reaction isochorismate + 2-oxoglutarate + H(+) = 5-enolpyruvoyl-6-hydroxy-2-succinyl-cyclohex-3-ene-1-carboxylate + CO2. Its pathway is quinol/quinone metabolism; 1,4-dihydroxy-2-naphthoate biosynthesis; 1,4-dihydroxy-2-naphthoate from chorismate: step 2/7. It participates in quinol/quinone metabolism; menaquinone biosynthesis. Catalyzes the thiamine diphosphate-dependent decarboxylation of 2-oxoglutarate and the subsequent addition of the resulting succinic semialdehyde-thiamine pyrophosphate anion to isochorismate to yield 2-succinyl-5-enolpyruvyl-6-hydroxy-3-cyclohexene-1-carboxylate (SEPHCHC). The polypeptide is 2-succinyl-5-enolpyruvyl-6-hydroxy-3-cyclohexene-1-carboxylate synthase (Mycobacterium avium (strain 104)).